Reading from the N-terminus, the 338-residue chain is Glyceraldehyde-3-phosphate dehydrogenase 2 (338 aa).

Residues 13-14 (TI) and Gly-111 each bind NAD(+). Residue 140 to 142 (SCN) coordinates D-glyceraldehyde 3-phosphate. Residue Cys-141 is the Nucleophile of the active site. NAD(+) is bound at residue Arg-169. 195-196 (HG) is a D-glyceraldehyde 3-phosphate binding site. Residue Gln-300 coordinates NAD(+).

It belongs to the glyceraldehyde-3-phosphate dehydrogenase family. Homotetramer.

Its subcellular location is the cytoplasm. The catalysed reaction is D-glyceraldehyde 3-phosphate + phosphate + NADP(+) = (2R)-3-phospho-glyceroyl phosphate + NADPH + H(+). It catalyses the reaction D-glyceraldehyde 3-phosphate + phosphate + NAD(+) = (2R)-3-phospho-glyceroyl phosphate + NADH + H(+). It functions in the pathway carbohydrate degradation; glycolysis; pyruvate from D-glyceraldehyde 3-phosphate: step 1/5. In Methanosarcina barkeri (strain Fusaro / DSM 804), this protein is Glyceraldehyde-3-phosphate dehydrogenase 2.